Here is a 308-residue protein sequence, read N- to C-terminus: Protein translocase subunit SecF (308 aa).

The next 6 membrane-spanning stretches (helical) occupy residues Val23–Tyr42, Ile140–Val160, Trp164–Phe184, Leu194–Ile214, Ile246–Ala266, and Val272–Ile292.

It belongs to the SecD/SecF family. SecF subfamily. In terms of assembly, forms a complex with SecD. Part of the essential Sec protein translocation apparatus which comprises SecA, SecYEG and auxiliary proteins SecDF-YajC and YidC.

The protein resides in the cell inner membrane. Its function is as follows. Part of the Sec protein translocase complex. Interacts with the SecYEG preprotein conducting channel. SecDF uses the proton motive force (PMF) to complete protein translocation after the ATP-dependent function of SecA. In Rickettsia typhi (strain ATCC VR-144 / Wilmington), this protein is Protein translocase subunit SecF.